Consider the following 778-residue polypeptide: MGKQGFGYIFLTIFCTMALKLNCVSSVSVAGLGYVVTAAVVLSAVPVSMVEHAEFSKAGKEPGLQIWRIEKFDLVPVPKNLYGDFFTGDSYLVLNTIRQRSGNLQYDLHFWLGDESSQDERGAAAIFTVQMDDYLQGKAVQHREVQGHESSTFLGYFKSGIKYKAGGVASGFRHVVPNEVTVQRLLQVKGRRTVRATEVPVSWESFNTGDCFILDLGSNIYQWCGSNSNRQERLKATVLAKGIRDNEKNGRAKVFVSEEGAEREEMLQVLGPKPSLPQGASDDTKTDTANRKLAKLYKVSNGAGNMAVSLVADENPFSQAALNTEDCFILDHGTDGKIFVWKGRSANSDERKAALKTATDFIDKMGYPKHTQVQVLPESGETPLFKQFFKNWRDKDQTEGLGEAYISGHVAKIEKVPFDAATLHTSRAMAAQHGMEDDGSGKKQIWRIEGSEKVPVDPATYGQFYGGDSYIILYDYRHAGKQGQIIYTWQGAHSTQDEIATSAFLTVQLDEELGGSPVQKRVVQGKEPPHLMSMFGGKPLIVYKGGTSREGGQTTPAQTRLFQVRSSTSGATRAVELDPAASQLNSNDAFVLKTPSAAYLWVGRGSNSAELSGAQELLKVLGARPVQVSEGREPDNFWVALGGKAPYRTSPRLKDKKMDAYPPRLFACSNKSGRFTIEEVPGDLTQDDLATDDVMILDTWDQVFVWIGKDAQEEEKTEALKSAKRYIETDPASRDKRTPVTLVKQGLEPPTFSGWFLGWDDDYWSVDPLQRAMADVDV.

An N-terminal signal peptide occupies residues 1–23 (MGKQGFGYIFLTIFCTMALKLNC). Residues 49 to 172 (MVEHAEFSKA…YKAGGVASGF (124 aa)) form an actin-severing region. Residues 72-154 (FDLVPVPKNL…VQGHESSTFL (83 aa)) form a Gelsolin-like 1 repeat. Residues Gly-88, Asp-89, Glu-120, Asp-132, Gly-137, and Ala-139 each coordinate Ca(2+). Residues 119–122 (DERG) are actin-actin interfilament contact point. 158 to 165 (KSGIKYKA) contributes to the a 1,2-diacyl-sn-glycero-3-phospho-(1D-myo-inositol-4,5-bisphosphate) binding site. Val-168 contacts Ca(2+). An a 1,2-diacyl-sn-glycero-3-phospho-(1D-myo-inositol-4,5-bisphosphate)-binding site is contributed by 184–192 (RLLQVKGRR). The Gelsolin-like 2 repeat unit spans residues 193 to 266 (TVRATEVPVS…SEEGAEREEM (74 aa)). Gly-209 and Asp-210 together coordinate Ca(2+). A disulfide bridge connects residues Cys-211 and Cys-224. Residues Glu-232, Asp-282, Glu-325, Asp-326, Glu-350, Gly-467, Asp-468, Glu-498, Asp-510, Gly-515, Pro-517, Thr-547, Asn-587, Asp-588, Glu-610, Asp-692, Asp-693, and Glu-715 each contribute to the Ca(2+) site. Gelsolin-like repeat units follow at residues 313-385 (DENP…TPLF) and 451-532 (SEKV…PHLM). The segment at 430–778 (AAQHGMEDDG…LQRAMADVDV (349 aa)) is actin-binding, Ca-sensitive. Gelsolin-like repeat units lie at residues 574-638 (AVEL…DNFW) and 677-752 (IEEV…PPTF).

It belongs to the villin/gelsolin family. As to quaternary structure, binds to actin and to fibronectin. In terms of tissue distribution, highly expressed in homogene cells of the basilar papilla. Also detected in subcutaneous layer of the skin.

It localises to the secreted. Its subcellular location is the cytoplasm. The protein localises to the cytoskeleton. Functionally, calcium-regulated, actin-modulating protein that binds to the plus (or barbed) ends of actin monomers or filaments, preventing monomer exchange (end-blocking or capping). It can promote the assembly of monomers into filaments (nucleation) as well as sever filaments already formed. Plays a role in ciliogenesis. This Gallus gallus (Chicken) protein is Gelsolin (GSN).